Here is a 234-residue protein sequence, read N- to C-terminus: uncharacterized protein (234 aa).

Helical transmembrane passes span 22-42 (TFLNTLIYCILLVIYEYIPLI), 59-79 (INWALSFGILPCAFAIFAYLI), 154-174 (FWIFFEFSIIALISFLIIFFC), and 186-206 (LLSLFFFVILSFSVSGIIFAL).

The protein resides in the cell membrane. This is an uncharacterized protein from Escherichia coli (strain K12).